The sequence spans 448 residues: Argininosuccinate synthase (448 aa).

Residues 17-25 and alanine 43 each bind ATP; that span reads AFSGGLDTS. Residue tyrosine 99 participates in L-citrulline binding. ATP contacts are provided by glycine 129 and threonine 131. Positions 131, 135, and 136 each coordinate L-aspartate. L-citrulline is bound at residue asparagine 135. An ATP-binding site is contributed by aspartate 136. Residues arginine 139 and serine 192 each coordinate L-citrulline. Residue aspartate 194 coordinates ATP. Threonine 201, glutamate 203, and glutamate 280 together coordinate L-citrulline.

It belongs to the argininosuccinate synthase family. Type 2 subfamily. Homotetramer.

The protein resides in the cytoplasm. The enzyme catalyses L-citrulline + L-aspartate + ATP = 2-(N(omega)-L-arginino)succinate + AMP + diphosphate + H(+). It participates in amino-acid biosynthesis; L-arginine biosynthesis; L-arginine from L-ornithine and carbamoyl phosphate: step 2/3. This is Argininosuccinate synthase from Bradyrhizobium sp. (strain ORS 278).